Here is a 254-residue protein sequence, read N- to C-terminus: Diphthine synthase (254 aa).

S-adenosyl-L-methionine is bound by residues Asp-83, Leu-86, 111 to 112 (SI), Leu-163, and Val-205.

It belongs to the diphthine synthase family. Homodimer.

The catalysed reaction is 2-[(3S)-amino-3-carboxypropyl]-L-histidyl-[translation elongation factor 2] + 3 S-adenosyl-L-methionine = diphthine-[translation elongation factor 2] + 3 S-adenosyl-L-homocysteine + 3 H(+). Its pathway is protein modification; peptidyl-diphthamide biosynthesis. Functionally, S-adenosyl-L-methionine-dependent methyltransferase that catalyzes the trimethylation of the amino group of the modified target histidine residue in translation elongation factor 2 (EF-2), to form an intermediate called diphthine. The three successive methylation reactions represent the second step of diphthamide biosynthesis. In Pyrobaculum aerophilum (strain ATCC 51768 / DSM 7523 / JCM 9630 / CIP 104966 / NBRC 100827 / IM2), this protein is Diphthine synthase.